Consider the following 436-residue polypeptide: Trigger factor (436 aa).

Positions 161 to 246 constitute a PPIase FKBP-type domain; that stretch reads GMRVTMDFIG…LIKVEEQILP (86 aa).

Belongs to the FKBP-type PPIase family. Tig subfamily.

It localises to the cytoplasm. The enzyme catalyses [protein]-peptidylproline (omega=180) = [protein]-peptidylproline (omega=0). Functionally, involved in protein export. Acts as a chaperone by maintaining the newly synthesized protein in an open conformation. Functions as a peptidyl-prolyl cis-trans isomerase. In Aeromonas salmonicida (strain A449), this protein is Trigger factor.